A 173-amino-acid polypeptide reads, in one-letter code: RNA pyrophosphohydrolase (173 aa).

In terms of domain architecture, Nudix hydrolase spans 6 to 149; sequence GYRPNVGIIL…KRHVYRRALR (144 aa). Residues 38–59 carry the Nudix box motif; that stretch reads GGIRRDESPLDAMYRELAEETG.

It belongs to the Nudix hydrolase family. RppH subfamily. A divalent metal cation serves as cofactor.

Accelerates the degradation of transcripts by removing pyrophosphate from the 5'-end of triphosphorylated RNA, leading to a more labile monophosphorylated state that can stimulate subsequent ribonuclease cleavage. This is RNA pyrophosphohydrolase from Thioalkalivibrio sulfidiphilus (strain HL-EbGR7).